The following is a 235-amino-acid chain: Large ribosomal subunit protein uL1 (235 aa).

The protein belongs to the universal ribosomal protein uL1 family. Part of the 50S ribosomal subunit.

In terms of biological role, binds directly to 23S rRNA. The L1 stalk is quite mobile in the ribosome, and is involved in E site tRNA release. Protein L1 is also a translational repressor protein, it controls the translation of the L11 operon by binding to its mRNA. The sequence is that of Large ribosomal subunit protein uL1 from Desulfotalea psychrophila (strain LSv54 / DSM 12343).